The sequence spans 447 residues: MREIVHLQTGQCGNQIGAAFWQTIAGEHGLDGSGHYTGSSDLQLERMNVYFNEASSKKYVPRAVLVDLEPAALDAVRAGPFGQLFRPDNVVFGQSGAGNNWAKGHYTEGANLVDQVIDVVRREAEGCDCLQGFQITHSLGGGTGAGMGTLLISKIREEFPAGMMATFSVVPSPMVSDTVVEPYNATLSIHQLVEHSDETFCIDNEALYNICMRTLKLTNPSYGDLNHLVSAVMSGVSTSLRFPGQLNSDLRKLAVNMVPFPRLHFFMVGFAPLTSRNAYSFRAVSVPELTQQMFDPKNMMAATDFRSGRYLTCSAIFRGKVSMKEVEDQMRNIQNKNSAYFVEWIPNNVQTALCSIPPRGLQMSSTFVGNSTSIQELFKRVGDQFTAMFRKKAFLFWYTGEGMDEMEFTEAENNMNDLVSEYQQYQDASVSDGEEEYLEDEQLEGEE.

The GTP site is built by Gln11, Glu69, Ser138, Gly142, Thr143, Gly144, Asn204, and Asn226. A Mg(2+)-binding site is contributed by Glu69.

The protein belongs to the tubulin family. Dimer of alpha and beta chains. A typical microtubule is a hollow water-filled tube with an outer diameter of 25 nm and an inner diameter of 15 nM. Alpha-beta heterodimers associate head-to-tail to form protofilaments running lengthwise along the microtubule wall with the beta-tubulin subunit facing the microtubule plus end conferring a structural polarity. Microtubules usually have 13 protofilaments but different protofilament numbers can be found in some organisms and specialized cells. Mg(2+) serves as cofactor.

The protein resides in the cytoplasm. The protein localises to the cytoskeleton. Its function is as follows. Tubulin is the major constituent of microtubules, a cylinder consisting of laterally associated linear protofilaments composed of alpha- and beta-tubulin heterodimers. Microtubules grow by the addition of GTP-tubulin dimers to the microtubule end, where a stabilizing cap forms. Below the cap, tubulin dimers are in GDP-bound state, owing to GTPase activity of alpha-tubulin. The sequence is that of Tubulin beta chain from Trichophyton rubrum (Athlete's foot fungus).